Reading from the N-terminus, the 401-residue chain is Enolase (401 aa).

Q154 is a (2R)-2-phosphoglycerate binding site. Catalysis depends on E197, which acts as the Proton donor. 3 residues coordinate Mg(2+): D233, E274, and D301. (2R)-2-phosphoglycerate is bound by residues K326, R355, S356, and K377. K326 serves as the catalytic Proton acceptor.

This sequence belongs to the enolase family. It depends on Mg(2+) as a cofactor.

It is found in the cytoplasm. Its subcellular location is the secreted. The protein localises to the cell surface. It carries out the reaction (2R)-2-phosphoglycerate = phosphoenolpyruvate + H2O. It functions in the pathway carbohydrate degradation; glycolysis; pyruvate from D-glyceraldehyde 3-phosphate: step 4/5. Functionally, catalyzes the reversible conversion of 2-phosphoglycerate (2-PG) into phosphoenolpyruvate (PEP). It is essential for the degradation of carbohydrates via glycolysis. The polypeptide is Enolase (Thermoplasma acidophilum (strain ATCC 25905 / DSM 1728 / JCM 9062 / NBRC 15155 / AMRC-C165)).